Here is a 258-residue protein sequence, read N- to C-terminus: Trypsin (258 aa).

The first 16 residues, 1–16 (MIRFTLALAVIGVTFA), serve as a signal peptide directing secretion. The propeptide at 17–29 (ASTPQIETNPNLE) is activation peptide. Residues 30-257 (IIGGHDANII…FRDWINEETE (228 aa)) enclose the Peptidase S1 domain. Cysteine 55 and cysteine 71 are joined by a disulfide. The active-site Charge relay system is the histidine 70. A glycan (N-linked (GlcNAc...) asparagine) is linked at asparagine 110. Aspartate 117 serves as the catalytic Charge relay system. Asparagine 130 and asparagine 188 each carry an N-linked (GlcNAc...) asparagine glycan. 2 disulfide bridges follow: cysteine 182–cysteine 197 and cysteine 209–cysteine 233. Residue serine 213 is the Charge relay system of the active site.

The protein belongs to the peptidase S1 family. Expressed in larval carcasses and gut, and adult gut.

Its subcellular location is the secreted. The catalysed reaction is Preferential cleavage: Arg-|-Xaa, Lys-|-Xaa.. This chain is Trypsin, found in Phaedon cochleariae (Mustard beetle).